The following is a 215-amino-acid chain: MSEAKRLAAEKAIDYVEDGMIVGVGTGSTVAYFIDALGHIGHRIKGAVSSSEQSTARLRQHGIEVLDLNHTGNLSLYVDGADECDPNRCLIKGGGAALTREKIIAEASERFICIVDPSKQVPVLGKFPLPVEVIPMARSLVARQILALTGGQPVWRDGVVTDNGNVVLDVHNLQITDPVALERSLNQIPGVVCVGLFARRPADVVIVGGEPPRVL.

Substrate contacts are provided by residues 26–29, 79–82, and 92–95; these read TGST, DGAD, and KGGG. Glutamate 101 serves as the catalytic Proton acceptor. Position 119 (lysine 119) interacts with substrate.

This sequence belongs to the ribose 5-phosphate isomerase family. Homodimer.

The catalysed reaction is aldehydo-D-ribose 5-phosphate = D-ribulose 5-phosphate. It participates in carbohydrate degradation; pentose phosphate pathway; D-ribose 5-phosphate from D-ribulose 5-phosphate (non-oxidative stage): step 1/1. Catalyzes the reversible conversion of ribose-5-phosphate to ribulose 5-phosphate. The protein is Ribose-5-phosphate isomerase A of Xanthomonas oryzae pv. oryzae (strain MAFF 311018).